Here is a 693-residue protein sequence, read N- to C-terminus: Bacterial dynamin-like protein (693 aa).

Topologically, residues 1 to 521 (MVNQVATDRF…DNSPGWAKWA (521 aa)) are cytoplasmic. One can recognise a Dynamin-type G domain in the interval 66-313 (QQGVFRLLVL…QADLDGTGFP (248 aa)). Residues 76 to 83 (GDMKRGKS) are G1 motif. Position 79–84 (79–84 (KRGKST)) interacts with GTP. The tract at residues 102–103 (CT) is G2 motif. The G3 motif stretch occupies residues 180-183 (DSPG). 235–241 (FLVNAWD) serves as a coordination point for GTP. The segment at 238–241 (NAWD) is G4 motif. N268 is a region of interest (G5 motif). Residue 292-293 (SI) coordinates GTP. A middle domain region spans residues 311–571 (GFPKFMDSLN…TAVTGILLGP (261 aa)). Residues 347-378 (REAVARRIPLLEQDVNELKKRIDSVEPEFNKL) are a coiled coil. An intramembrane segment occupies 522-574 (MGLLSLSKGNLAGFALAGAGFDWKNILLNYFTVIGIGGIITAVTGILLGPIGF). The segment at 572-606 (IGFALLGLGVGFLQADQARRELVKTAKKELVKHLP) is paddle domain. Over 575 to 693 (ALLGLGVGFL…AYSNLLAYYS (119 aa)) the chain is Cytoplasmic. Positions 607 to 693 (QVAHEQSQVV…AYSNLLAYYS (87 aa)) are GED. Positions 661-688 (ESEFNRLKNLQEDVIAQLQKIEAAYSNL) form a coiled coil.

The protein belongs to the TRAFAC class dynamin-like GTPase superfamily. Dynamin/Fzo/YdjA family. Mitofusin subfamily. As to quaternary structure, homodimer. Self-assembles in the presence of GMP-PNP and liposomes, and probably also in the presence of GTP.

The protein localises to the cell inner membrane. It catalyses the reaction GTP + H2O = GDP + phosphate + H(+). In terms of biological role, dynamin-related GTPase probably involved in membrane remodeling. Lipid and nucleotide-binding are thought to induce a large intramolecular rearrangement, leading to assembly on lipid bilayers and possible membrane curving. In the presence of the non-hydrolyzable GTP analog GMP-PNP self-assembles on a lipid bilayer; this does not stimulate subsequent GTPase activity. Does not bind lipids in the presence of GDP; perhaps GTP hydrolysis disrupts membrane-binding. This Nostoc punctiforme (strain ATCC 29133 / PCC 73102) protein is Bacterial dynamin-like protein.